The chain runs to 255 residues: MYIEVTGYGPALVLIHGWAMHSGVFAPLVEQLRPHHTLYLVDLPGHGYNHTTPTPLALPQVVHAIAAATPPAVWLGWSLGGLFALHAAATLPQVRGLIMLAATPCFVRREDWPHAVEVSILTQFAQDLKQNYTETINRFLALDTLGSTHAQSELRQLRKILNARHTPNTATLQAGLELLAHTDLRRALIDLTPPSLWIAGQRDRLVPAASIQAATVLAPSDQTELLTITGGGHAPFLSHANQMTAALQHFIATLP.

Substrate contacts are provided by residues Trp-18, 78–79 (SL), and 139–143 (FLALD). Ser-78 functions as the Nucleophile in the catalytic mechanism. Active-site residues include Asp-203 and His-233. His-233 contacts substrate.

It belongs to the AB hydrolase superfamily. Carboxylesterase BioH family. Monomer.

It localises to the cytoplasm. It carries out the reaction 6-carboxyhexanoyl-[ACP] methyl ester + H2O = 6-carboxyhexanoyl-[ACP] + methanol + H(+). It functions in the pathway cofactor biosynthesis; biotin biosynthesis. Functionally, the physiological role of BioH is to remove the methyl group introduced by BioC when the pimeloyl moiety is complete. It allows to synthesize pimeloyl-ACP via the fatty acid synthetic pathway through the hydrolysis of the ester bonds of pimeloyl-ACP esters. In Xylella fastidiosa (strain M23), this protein is Pimeloyl-[acyl-carrier protein] methyl ester esterase.